The primary structure comprises 278 residues: Formamidopyrimidine-DNA glycosylase (278 aa).

Residue proline 2 is the Schiff-base intermediate with DNA of the active site. Residue glutamate 3 is the Proton donor of the active site. Catalysis depends on lysine 58, which acts as the Proton donor; for beta-elimination activity. DNA contacts are provided by histidine 92 and arginine 111. An FPG-type zinc finger spans residues 239–273 (HVYGKKGVPCERCGTPIEKIKVAQRGTHFCPKCQI). The active-site Proton donor; for delta-elimination activity is arginine 263.

It belongs to the FPG family. As to quaternary structure, monomer. Zn(2+) is required as a cofactor.

The catalysed reaction is Hydrolysis of DNA containing ring-opened 7-methylguanine residues, releasing 2,6-diamino-4-hydroxy-5-(N-methyl)formamidopyrimidine.. The enzyme catalyses 2'-deoxyribonucleotide-(2'-deoxyribose 5'-phosphate)-2'-deoxyribonucleotide-DNA = a 3'-end 2'-deoxyribonucleotide-(2,3-dehydro-2,3-deoxyribose 5'-phosphate)-DNA + a 5'-end 5'-phospho-2'-deoxyribonucleoside-DNA + H(+). In terms of biological role, involved in base excision repair of DNA damaged by oxidation or by mutagenic agents. Acts as a DNA glycosylase that recognizes and removes damaged bases. Has a preference for oxidized purines, such as 7,8-dihydro-8-oxoguanine (8-oxoG). Has AP (apurinic/apyrimidinic) lyase activity and introduces nicks in the DNA strand. Cleaves the DNA backbone by beta-delta elimination to generate a single-strand break at the site of the removed base with both 3'- and 5'-phosphates. The polypeptide is Formamidopyrimidine-DNA glycosylase (Latilactobacillus sakei subsp. sakei (strain 23K) (Lactobacillus sakei subsp. sakei)).